Reading from the N-terminus, the 154-residue chain is RING finger protein 11 (154 aa).

Residues 1 to 12 show a composition bias toward polar residues; sequence MGNCLKSPTSDD. Residues 1–53 form a disordered region; that stretch reads MGNCLKSPTSDDISLLHESQSDRASFGEGTEPDQEPPPPYQEQVPVPVYHPTP. Residue G2 is the site of N-myristoyl glycine attachment. C4 carries the S-palmitoyl cysteine lipid modification. 2 positions are modified to phosphoserine: S14 and S25. The short motif at 37–40 is the PPxY motif element; the sequence is PPPY. The segment covering 41–51 has biased composition (low complexity); the sequence is QEQVPVPVYHP. The RING-type zinc finger occupies 99-140; that stretch reads CVICMMDFVYGDPIRFLPCMHIYHLDCIDDWLMRSFTCPSCM. Residue T135 is modified to Phosphothreonine; by PKB/AKT1.

In terms of assembly, interacts (when phosphorylated) with 14-3-3. Interacts with the E3 ubiquitin-ligases NEDD4, ITCH, SMURF2 and WWP1. Also interacts with the E2 ubiquitin-conjugating enzymes UBE2D1 and UBE2N, but neither with CDC34, nor with UBE2L3. Interacts with ZNF350, EPS15 and STAMBP. After TNF stimulation, interacts with TAX1BP1, TNFAIP3 and RIPK1; these interactions are transient and they are lost after 1 hour of stimulation with TNF. Interacts with GGA1. Ubiquitinated in the presence of ITCH, SMURF2 and UBE2D1, as well as WWP1. In terms of processing, phosphorylation by PKB/AKT1 may accelerate degradation by the proteasome. Post-translationally, acylation at both Gly-2 and Cys-4 is required for proper localization to the endosomes.

The protein localises to the early endosome. It localises to the recycling endosome. Its subcellular location is the cytoplasm. The protein resides in the nucleus. Essential component of a ubiquitin-editing protein complex, comprising also TNFAIP3, ITCH and TAX1BP1, that ensures the transient nature of inflammatory signaling pathways. Promotes the association of TNFAIP3 to RIPK1 after TNF stimulation. TNFAIP3 deubiquitinates 'Lys-63' polyubiquitin chains on RIPK1 and catalyzes the formation of 'Lys-48'-polyubiquitin chains. This leads to RIPK1 proteasomal degradation and consequently termination of the TNF- or LPS-mediated activation of NF-kappa-B. Recruits STAMBP to the E3 ubiquitin-ligase SMURF2 for ubiquitination, leading to its degradation by the 26S proteasome. This is RING finger protein 11 (RNF11) from Bos taurus (Bovine).